We begin with the raw amino-acid sequence, 72 residues long: MAKEDNIEMQGTILETLPNTMFRVELENGHVVIAHISGKMRKNYIRILTGDKVTVQLTPYDLTKGRIVFRAR.

The 72-residue stretch at 1–72 (MAKEDNIEMQ…TKGRIVFRAR (72 aa)) folds into the S1-like domain.

Belongs to the IF-1 family. In terms of assembly, component of the 30S ribosomal translation pre-initiation complex which assembles on the 30S ribosome in the order IF-2 and IF-3, IF-1 and N-formylmethionyl-tRNA(fMet); mRNA recruitment can occur at any time during PIC assembly.

The protein resides in the cytoplasm. One of the essential components for the initiation of protein synthesis. Stabilizes the binding of IF-2 and IF-3 on the 30S subunit to which N-formylmethionyl-tRNA(fMet) subsequently binds. Helps modulate mRNA selection, yielding the 30S pre-initiation complex (PIC). Upon addition of the 50S ribosomal subunit IF-1, IF-2 and IF-3 are released leaving the mature 70S translation initiation complex. The protein is Translation initiation factor IF-1 of Shewanella baltica (strain OS155 / ATCC BAA-1091).